The sequence spans 130 residues: Ribosome-binding factor A (130 aa).

The protein belongs to the RbfA family. Monomer. Binds 30S ribosomal subunits, but not 50S ribosomal subunits or 70S ribosomes.

It is found in the cytoplasm. Functionally, one of several proteins that assist in the late maturation steps of the functional core of the 30S ribosomal subunit. Associates with free 30S ribosomal subunits (but not with 30S subunits that are part of 70S ribosomes or polysomes). Required for efficient processing of 16S rRNA. May interact with the 5'-terminal helix region of 16S rRNA. This Flavobacterium johnsoniae (strain ATCC 17061 / DSM 2064 / JCM 8514 / BCRC 14874 / CCUG 350202 / NBRC 14942 / NCIMB 11054 / UW101) (Cytophaga johnsonae) protein is Ribosome-binding factor A.